We begin with the raw amino-acid sequence, 89 residues long: Small ribosomal subunit protein uS15 (89 aa).

This sequence belongs to the universal ribosomal protein uS15 family. In terms of assembly, part of the 30S ribosomal subunit. Forms a bridge to the 50S subunit in the 70S ribosome, contacting the 23S rRNA.

Functionally, one of the primary rRNA binding proteins, it binds directly to 16S rRNA where it helps nucleate assembly of the platform of the 30S subunit by binding and bridging several RNA helices of the 16S rRNA. Its function is as follows. Forms an intersubunit bridge (bridge B4) with the 23S rRNA of the 50S subunit in the ribosome. The sequence is that of Small ribosomal subunit protein uS15 from Bifidobacterium adolescentis (strain ATCC 15703 / DSM 20083 / NCTC 11814 / E194a).